Reading from the N-terminus, the 997-residue chain is Serine-repeat antigen protein 5 (997 aa).

The first 22 residues, 1–22 (MKSYISLFFILCVIFNKNVIKC), serve as a signal peptide directing secretion. Disordered stretches follow at residues 26 to 107 (SQTG…EKQD) and 181 to 252 (LPSN…PRNL). A compositionally biased stretch (gly residues) spans 30-51 (NTGGGQAGNTGGDQAGSTGGSP). Over residues 52–67 (QGSTGASPQGSTGASP) the composition is skewed to low complexity. The segment covering 68-84 (QGSTGASQPGSSEPSNP) has biased composition (polar residues). 3 stretches are compositionally biased toward low complexity: residues 85–103 (VSSGHSVSTVSVSQTSTSS), 183–196 (SNGTTGEQGSSTGT), and 205–235 (SDSSSSSSSSSSSSSSSSSSSSSSSSSSSES). S183 carries the post-translational modification Phosphoserine. N184 is a glycosylation site (N-linked (GlcNAc...) asparagine). Residues 216–253 (SSSSSSSSSSSSSSSSSSESLPANGPDSPTVKPPRNLQ) are interaction with PTKL. Residue N318 is glycosylated (N-linked (GlcNAc...) asparagine). The interval 373–390 (YKYLSEDIVSKFKEIKAE) is interaction with host VTN. C445 and C497 are disulfide-bonded. Residue T549 is modified to Phosphothreonine; by CPK1. Intrachain disulfides connect C567-C572, C581-C610, C593-C636, C627-C672, and C755-C809. The interval 579-997 (NNCISNLQVE…TNNECYFCYV (419 aa)) is thiol-protease-like. Active-site residues include H762 and N787. The N-linked (GlcNAc...) asparagine glycan is linked to N828. Positions 843-886 (KASPEFYHNLYFKNFNVGKKNLFSEKEDNENNKKLGNNYIIFGQ) are cleaved as a propeptide — inhibition peptide. S866 is modified (phosphoserine).

This sequence belongs to the peptidase C1 family. May interact (via C-terminus) with PTKL (via SAM domain). In terms of assembly, interacts (via C-terminus) with human VTN (via hemopexin repeat 2); may form heterotetramers of two VTN and SERA5 P47 heterodimers; the interaction may protect merozoites from phagocytosis by host monocytes; VTN glycosylation appears to be dispensable for the interaction. As to quaternary structure, monomer. Interacts with kinase CPK1/CDPK1 at the schizont stage. Post-translationally, phosphorylation by CPK1/CDPK1 increases SERA5 protease activity towards a synthetic peptide in vitro. In terms of processing, just prior to merozoite egress from host erythrocytes, proteolytically cleaved into multiple fragments. Cleaved by SUB1 into p47 and p73, p73 is further cleaved by SUB1 into p56 and p18 and p56 is further processed into p50 by an unidentified protease. p47 remains covalently associated with p18 via disulfide bond. p47 can be processed into p25n and p25c by SUB1. p25c and p25n remain associated with p18. Proteolytic processing is essential for merozoite egress from host erythrocytes. The cleavage of the propeptide to produce p50 is necessary for protease activity and to promote merozoite egress.

Its subcellular location is the parasitophorous vacuole. The protein resides in the secreted. It localises to the cell membrane. Plays an essential role during the asexual blood stage development by controlling the kinetics of merozoite egress from host erythrocytes. Specifically, prevents premature rupture of the parasitophorous vacuole and host erythrocyte membranes. Functionally, may prevent merozoite phagocytosis by host monocytes via interaction with host VTN at the merozoite surface. Plays a role in parasite growth. Its function is as follows. Protease activity is controversial. Has been shown in a number of studies to have protease activity towards a synthetic peptide in vitro. Has also been shown to lack protease activity towards a synthetic peptide in vitro. This Plasmodium falciparum (isolate 3D7) protein is Serine-repeat antigen protein 5.